A 440-amino-acid chain; its full sequence is 5-hydroxytryptamine receptor 6 (440 aa).

At 1–27 the chain is on the extracellular side; the sequence is MVPEPGPSANSTPAWGAGPPSAPGGSG. A helical membrane pass occupies residues 28–52; that stretch reads WVAAALCVVIALTAAANSLLIALIC. Residues 53–62 lie on the Cytoplasmic side of the membrane; the sequence is TQPALRNTSN. The chain crosses the membrane as a helical span at residues 63–88; the sequence is FFLVSLFTSDLMVGLVVMPPAMLNAL. Residues 89–96 lie on the Extracellular side of the membrane; that stretch reads YGRWVLAR. Residues 97–122 form a helical membrane-spanning segment; sequence GLCLLWTAFDVMCCSASILNLCLISL. Cysteines 99 and 180 form a disulfide. Residue Asp-106 participates in serotonin binding. Topologically, residues 123-142 are cytoplasmic; it reads DRYLLILSPLRYKLRMTPPR. The helical transmembrane segment at 143–167 threads the bilayer; the sequence is ALALVLGAWSLAALASFLPLLLGWH. Over 168–185 the chain is Extracellular; it reads ELGHARPPVPGQCRLLAS. Residues 186–209 form a helical membrane-spanning segment; sequence LPFVLVASGLTFFLPSGAICFTYC. The Cytoplasmic portion of the chain corresponds to 210 to 266; it reads RILLAARKQAVQVASLTTGMASQASETLQVPRTPRPGVESADSRRLATKHSRKALKA. A helical transmembrane segment spans residues 267–293; it reads SLTLGILLGMFFVTWLPFFVANIVQAV. Asn-288 provides a ligand contact to serotonin. The Extracellular portion of the chain corresponds to 294–299; that stretch reads CDCISP. Residues 300-323 traverse the membrane as a helical segment; it reads GLFDVLTWLGYCNSTMNPIIYPLF. The Cytoplasmic segment spans residues 324–440; the sequence is MRDFKRALGR…RPHPLGIPTN (117 aa). Positions 346-392 are disordered; the sequence is ASLASPSLRTSHSGPRPGLSLQQVLPLPLPPDSDSDSDAGSGGSSGL. Residues 347–358 show a composition bias toward polar residues; it reads SLASPSLRTSHS. Over residues 362–371 the composition is skewed to low complexity; it reads PGLSLQQVLP.

This sequence belongs to the G-protein coupled receptor 1 family. In terms of assembly, interacts with MTOR, RPTOR and NF1. Interacts with CDK5.

It localises to the cell membrane. In terms of biological role, G-protein coupled receptor for 5-hydroxytryptamine (serotonin), a biogenic hormone that functions as a neurotransmitter, a hormone and a mitogen. Also has a high affinity for tricyclic psychotropic drugs. Ligand binding causes a conformation change that triggers signaling via guanine nucleotide-binding proteins (G proteins) and modulates the activity of downstream effectors. HTR6 is coupled to G(s) G alpha proteins and mediates activation of adenylate cyclase activity. Controls pyramidal neurons migration during corticogenesis, through the regulation of CDK5 activity. Is an activator of mTOR signaling. The protein is 5-hydroxytryptamine receptor 6 (HTR6) of Pan troglodytes (Chimpanzee).